A 710-amino-acid polypeptide reads, in one-letter code: MSLSFRPLKYKRHTQTSTPHHPKQDIYFHEQPPGPPLGQTMSPPQWQVEESNPGFLPNNFSQLNLDPQQPEANGGQQRSKGPENNLYRKYEEKVRPCIDLIDSLRALGVEQDLALPAIAVIGDQSSGKSSVLEALSGVALPRGSGIITRCPLVLKLTKRECEWTGKITYRNITQQLQNPSEVEWEIRRAQNIIAGNGRGISHELINLEVTSPDVPDLTLIDLPGITRVAVENQPQDIGLQIKALIIQRQETINLVVVPCNVDIATKKYTEALSMAQEVDPDGDRTIGILTKPDLVDKGTEKGVLKVMQNLTYHLKKGYMIVKCRGQQDITNKLSLAEATRKETMFFETHPYFRVLLDEGKATMPLLAERLTTELIWHINKSLPLLENQIKEKHQRATEELQQYGDDIPSDEGDKMFFLIEKIKVFNEDIGKLIEGEEIVMETESRLCNKIREEFTSWILILTTNIEKVKSILNEEVSKYEKKYRGKELLGFVNYKTFETVVKHYLGQLIDPALKMLQKAMEIVWQTFKDTAKKHFAEFCNLHQTVQNKIEDIKTKQMAEAANLIQLQFKMEKLVFCQDQIYGVVLNKVREDIFNSMGKASETPQSKQPFLNDQSSISSIVEIGVHLNAYFMETSKRLANQIPFIIQYFMLQENGDKVQKAMMQLLQDTQHYSWLLQEQSDTATKRKFLKEKIFRLTQAQQALYEFPHFKG.

The interval 1–87 is disordered; it reads MSLSFRPLKY…RSKGPENNLY (87 aa). Composition is skewed to polar residues over residues 39–50 and 58–79; these read QTMSPPQWQVEE and NNFS…QQRS. Residues 112–383 form the Dynamin-type G domain; sequence DLALPAIAVI…LIWHINKSLP (272 aa). The interval 122-129 is G1 motif; that stretch reads GDQSSGKS. 122-129 provides a ligand contact to GTP; that stretch reads GDQSSGKS. A G2 motif region spans residues 147–149; that stretch reads ITR. The segment at 221 to 224 is G3 motif; it reads DLPG. Residues 221-225 and 290-293 contribute to the GTP site; these read DLPGI and TKPD. The G4 motif stretch occupies residues 290–293; sequence TKPD. Positions 322-325 are G5 motif; the sequence is KCRG. One can recognise a GED domain in the interval 619–710; that stretch reads IVEIGVHLNA…ALYEFPHFKG (92 aa).

Belongs to the TRAFAC class dynamin-like GTPase superfamily. Dynamin/Fzo/YdjA family.

It is found in the cytoplasm. The protein localises to the nucleus. Functionally, interferon-induced dynamin-like GTPase with antiviral activity against vesicular stomatitis virus (VSV). This is Interferon-induced GTP-binding protein Mx2 (MX2) from Bubalus bubalis (Domestic water buffalo).